A 223-amino-acid chain; its full sequence is Phosphoribosylformylglycinamidine synthase subunit PurQ (223 aa).

The 220-residue stretch at 4–223 folds into the Glutamine amidotransferase type-1 domain; the sequence is FAVIVFPGTN…FKSIVEWMKK (220 aa). The active-site Nucleophile is C85. Residues H196 and E198 contribute to the active site.

As to quaternary structure, part of the FGAM synthase complex composed of 1 PurL, 1 PurQ and 2 PurS subunits.

Its subcellular location is the cytoplasm. It carries out the reaction N(2)-formyl-N(1)-(5-phospho-beta-D-ribosyl)glycinamide + L-glutamine + ATP + H2O = 2-formamido-N(1)-(5-O-phospho-beta-D-ribosyl)acetamidine + L-glutamate + ADP + phosphate + H(+). It catalyses the reaction L-glutamine + H2O = L-glutamate + NH4(+). It participates in purine metabolism; IMP biosynthesis via de novo pathway; 5-amino-1-(5-phospho-D-ribosyl)imidazole from N(2)-formyl-N(1)-(5-phospho-D-ribosyl)glycinamide: step 1/2. Functionally, part of the phosphoribosylformylglycinamidine synthase complex involved in the purines biosynthetic pathway. Catalyzes the ATP-dependent conversion of formylglycinamide ribonucleotide (FGAR) and glutamine to yield formylglycinamidine ribonucleotide (FGAM) and glutamate. The FGAM synthase complex is composed of three subunits. PurQ produces an ammonia molecule by converting glutamine to glutamate. PurL transfers the ammonia molecule to FGAR to form FGAM in an ATP-dependent manner. PurS interacts with PurQ and PurL and is thought to assist in the transfer of the ammonia molecule from PurQ to PurL. The polypeptide is Phosphoribosylformylglycinamidine synthase subunit PurQ (Pyrococcus horikoshii (strain ATCC 700860 / DSM 12428 / JCM 9974 / NBRC 100139 / OT-3)).